The sequence spans 182 residues: ATP-dependent protease subunit HslV (182 aa).

Residue threonine 12 is part of the active site. Residues alanine 167, cysteine 170, and threonine 173 each contribute to the Na(+) site.

The protein belongs to the peptidase T1B family. HslV subfamily. As to quaternary structure, a double ring-shaped homohexamer of HslV is capped on each side by a ring-shaped HslU homohexamer. The assembly of the HslU/HslV complex is dependent on binding of ATP.

The protein localises to the cytoplasm. The catalysed reaction is ATP-dependent cleavage of peptide bonds with broad specificity.. Allosterically activated by HslU binding. Functionally, protease subunit of a proteasome-like degradation complex believed to be a general protein degrading machinery. The polypeptide is ATP-dependent protease subunit HslV (Chlorobium phaeovibrioides (strain DSM 265 / 1930) (Prosthecochloris vibrioformis (strain DSM 265))).